We begin with the raw amino-acid sequence, 130 residues long: Ribosome-binding factor A (130 aa).

This sequence belongs to the RbfA family. Monomer. Binds 30S ribosomal subunits, but not 50S ribosomal subunits or 70S ribosomes.

It localises to the cytoplasm. Functionally, one of several proteins that assist in the late maturation steps of the functional core of the 30S ribosomal subunit. Associates with free 30S ribosomal subunits (but not with 30S subunits that are part of 70S ribosomes or polysomes). Required for efficient processing of 16S rRNA. May interact with the 5'-terminal helix region of 16S rRNA. The polypeptide is Ribosome-binding factor A (Prochlorococcus marinus (strain MIT 9301)).